The primary structure comprises 185 residues: Isopentenyl-diphosphate Delta-isomerase (185 aa).

2 residues coordinate Mn(2+): His-27 and His-34. The Nudix hydrolase domain maps to Pro-32–Leu-168. Cys-69 is a catalytic residue. Cys-69 provides a ligand contact to Mg(2+). His-71 lines the Mn(2+) pocket. Glu-89 contacts Mg(2+). Mn(2+) is bound by residues Glu-118 and Glu-120. Residue Glu-120 is part of the active site.

The protein belongs to the IPP isomerase type 1 family. It depends on Mg(2+) as a cofactor. Mn(2+) serves as cofactor.

Its subcellular location is the cytoplasm. It carries out the reaction isopentenyl diphosphate = dimethylallyl diphosphate. Its pathway is isoprenoid biosynthesis; dimethylallyl diphosphate biosynthesis; dimethylallyl diphosphate from isopentenyl diphosphate: step 1/1. In terms of biological role, catalyzes the 1,3-allylic rearrangement of the homoallylic substrate isopentenyl (IPP) to its highly electrophilic allylic isomer, dimethylallyl diphosphate (DMAPP). The chain is Isopentenyl-diphosphate Delta-isomerase from Leifsonia xyli subsp. xyli (strain CTCB07).